A 109-amino-acid polypeptide reads, in one-letter code: uncharacterized protein (109 aa).

The 59-residue stretch at 42-100 (LEEKLKQEKIDRKYLAEVTNIPYTTVSRIMRAEANREFNPEIDTILKIAKYFNCTMDEV) folds into the HTH cro/C1-type domain. Residues 53–72 (RKYLAEVTNIPYTTVSRIMR) constitute a DNA-binding region (H-T-H motif).

This is an uncharacterized protein from Rickettsia conorii (strain ATCC VR-613 / Malish 7).